Reading from the N-terminus, the 189-residue chain is Putative manganese efflux pump MntP (189 aa).

6 helical membrane passes run 3–23, 41–61, 69–89, 105–125, 133–153, and 168–188; these read PISLLFLALAMSTDAFAAALG, LIFGAIETITPVIGWGIGQVA, DHWIAFTLLLVLGLHMIYNGI, FWILAVTAFATSIDALAVGVG, IVIAALAIGLATTVMVTIGVM, and IVGGIVLIIVGATILYEHLSA.

This sequence belongs to the MntP (TC 9.B.29) family.

It is found in the cell inner membrane. Its function is as follows. Probably functions as a manganese efflux pump. This Pseudomonas savastanoi pv. phaseolicola (strain 1448A / Race 6) (Pseudomonas syringae pv. phaseolicola (strain 1448A / Race 6)) protein is Putative manganese efflux pump MntP.